We begin with the raw amino-acid sequence, 287 residues long: Phosphatidylglycerol--prolipoprotein diacylglyceryl transferase (287 aa).

The next 4 helical transmembrane spans lie at 26 to 46 (VAIRWYGLAYVTGILIGWWLA), 71 to 91 (FLVWAAIGIVLGGRIGYILFY), 106 to 126 (IWRGGMSFHGGLTGATLAMIV), and 132 to 152 (GLPVWMLFDLVACVAPIGLFF). A 1,2-diacyl-sn-glycero-3-phospho-(1'-sn-glycerol) is bound at residue arginine 154. Transmembrane regions (helical) follow at residues 187–207 (SQLYEAALEGLVLFVLLQVLA), 217–237 (GVISGVFICGYALARIFVEFF), and 251–271 (WLTMGMLLSLPMLALGLWAIW).

Belongs to the Lgt family.

It is found in the cell inner membrane. The enzyme catalyses L-cysteinyl-[prolipoprotein] + a 1,2-diacyl-sn-glycero-3-phospho-(1'-sn-glycerol) = an S-1,2-diacyl-sn-glyceryl-L-cysteinyl-[prolipoprotein] + sn-glycerol 1-phosphate + H(+). The protein operates within protein modification; lipoprotein biosynthesis (diacylglyceryl transfer). Catalyzes the transfer of the diacylglyceryl group from phosphatidylglycerol to the sulfhydryl group of the N-terminal cysteine of a prolipoprotein, the first step in the formation of mature lipoproteins. The sequence is that of Phosphatidylglycerol--prolipoprotein diacylglyceryl transferase from Allorhizobium ampelinum (strain ATCC BAA-846 / DSM 112012 / S4) (Agrobacterium vitis (strain S4)).